A 336-amino-acid chain; its full sequence is MIKKSSIKKYFKTIKDSSIKDISVDQQYPFDFKFYKPKVEGMIILFSLVILPLITVIFLNVFKTQLNITDERLGLIFQLSSILFTLVGAIIFWSRNPMSFWKSGVGILFGFPIFLQLFGLAFGLLANLVGVFNNNNNNAWSDIYNLLVQSVAEILVIIFAFSKINNLKSKVKKTFKENKKLLIPIAIAFAIVAFFVGNTLYSLIITELKLNLGESKNQEGLVSPFKVQGITKYIYMVLFIILTVFIAPLCEEIVARQALFTGVSNKVLSIIVSSLYFGILHISSGDVYNIFPYVIGGFFFSLAFSFSKGNLSYCWLSHSFYNLISVVLIIASLYIK.

This is an uncharacterized protein from Mycoplasma capricolum subsp. capricolum (strain California kid / ATCC 27343 / NCTC 10154).